A 419-amino-acid polypeptide reads, in one-letter code: Zinc metalloproteinase-disintegrin-like atrolysin-A (419 aa).

The region spanning 6-202 (RYVELVIVAD…YNPQCILNEP (197 aa)) is the Peptidase M12B domain. Position 9 (E9) interacts with Ca(2+). N-linked (GlcNAc...) asparagine glycosylation is present at N72. Residue D93 participates in Ca(2+) binding. Cystine bridges form between C117–C197, C157–C181, and C159–C164. Residue H142 participates in Zn(2+) binding. The active site involves E143. Zn(2+) is bound by residues H146 and H152. Residues C197, N200, V212, N215, L217, E219, E222, and D225 each coordinate Ca(2+). One can recognise a Disintegrin domain in the interval 210 to 296 (PPVCGNELLE…DCPTDDFHRN (87 aa)). Intrachain disulfides connect C213–C242, C224–C237, C226–C232, C236–C259, C250–C256, C255–C281, C268–C288, C275–C307, C300–C312, C319–C369, C334–C376, C347–C357, C364–C398, and C392–C403. The D/ECD-tripeptide motif lies at 274–276 (ECD). Residues N326, N338, and N342 are each glycosylated (N-linked (GlcNAc...) asparagine).

This sequence belongs to the venom metalloproteinase (M12B) family. P-III subfamily. P-IIIa sub-subfamily. As to quaternary structure, monomer. It depends on Zn(2+) as a cofactor. In terms of tissue distribution, expressed by the venom gland.

It is found in the secreted. The enzyme catalyses Cleavage of 3-Asn-|-Gln-4, 5-His-|-Leu-6, 10-His-|-Leu-11, 14-Ala-|-Leu-15 and 16-Tyr-|-Leu-17 in insulin B chain. Removes C-terminal Leu from small peptides.. In terms of biological role, snake venom zinc metalloproteinase-disintegrin that causes hemorrhage by provoking the degradation of the sub-endothelial matrix proteins (fibronectin, laminin, type IV collagen, nidogen, and gelatins) and disturbances in platelet function. The recombinant cysteine-rich domain interacts with the alpha-2/beta-1 integrin (ITGA2/ITGB1) (collagen receptor), and inhibits the platelet aggregation induced by collagen. The chain is Zinc metalloproteinase-disintegrin-like atrolysin-A from Crotalus atrox (Western diamondback rattlesnake).